Consider the following 452-residue polypeptide: Mitochondrial import inner membrane translocase subunit TIM50 (452 aa).

The N-terminal 23 residues, 1-23, are a transit peptide targeting the mitochondrion; sequence MSLSKLTQTCFSRHQAKTFIRLY. Topologically, residues 24–167 are mitochondrial matrix; sequence SSDFKSLLGP…RRKRMERNTR (144 aa). Disordered regions lie at residues 96–115 and 130–153; these read IEAE…TSSA and ESAA…GNAE. Residues 131-144 show a composition bias toward low complexity; it reads SAASKSSSSSGGSS. Residues 168-188 traverse the membrane as a helical segment; that stretch reads IGAYVLFGGSIIGFISFCFYY. The Mitochondrial intermembrane portion of the chain corresponds to 189–452; it reads GRAQRDEFGN…LFGSRRHVNA (264 aa). The FCP1 homology domain occupies 243–387; it reads YLQPKYTIVI…VDLAELLKTI (145 aa).

This sequence belongs to the TIM50 family.

The protein localises to the mitochondrion inner membrane. In terms of biological role, essential component of the TIM23 complex, a complex that mediates the translocation of transit peptide-containing proteins across the mitochondrial inner membrane. This chain is Mitochondrial import inner membrane translocase subunit TIM50 (scpl-4), found in Caenorhabditis elegans.